Consider the following 32-residue polypeptide: MTALLRVISLVVISVVVIIIPPCGAALGRGKA.

This Escherichia coli O157:H7 protein is ilv operon leader peptide (ilvL).